Reading from the N-terminus, the 401-residue chain is Mu-type opioid receptor (401 aa).

Residues 1–69 (MDSGAVPTNA…CPSAGSPSMI (69 aa)) lie on the Extracellular side of the membrane. 5 N-linked (GlcNAc...) asparagine glycosylation sites follow: asparagine 9, asparagine 12, asparagine 34, asparagine 41, and asparagine 49. The chain crosses the membrane as a helical span at residues 70 to 94 (TAIIIMALYSIVCVVGLFGNFLVMY). The Cytoplasmic segment spans residues 95–107 (VIVRYTKMKTATN). The helical transmembrane segment at 108–132 (IYIFNLALADALATSTLPFQSVNYL) threads the bilayer. The Extracellular segment spans residues 133–143 (MGTWPFGTILC). Cysteine 143 and cysteine 220 are joined by a disulfide. The helical transmembrane segment at 144-166 (KIVISIDYYNMFTSIFTLCTMSV) threads the bilayer. The Cytoplasmic segment spans residues 167–186 (DRYIAVCHPVKALDLRTPRN). Tyrosine 169 carries the post-translational modification Phosphotyrosine. Residues 187–208 (AKIINICNWILSSAIGLPVMFM) form a helical membrane-spanning segment. Residues 209 to 231 (ATTKYRQGSIDCTLTFSHPTWYW) are Extracellular-facing. Residues 232–256 (ENLLKICVFIFAFIMPILIITVCYG) form a helical membrane-spanning segment. Residues 257–280 (LMILRLKSVRMLSGSKEKDRNLRR) lie on the Cytoplasmic side of the membrane. A helical membrane pass occupies residues 281–307 (ITRMVLVVVAVFIVCWTPIHIYVIIKA). The Extracellular portion of the chain corresponds to 308-315 (LITIPETT). Residues 316–339 (FQTVSWHFCIALGYTNSCLNPVLY) traverse the membrane as a helical segment. An NPxxY; plays a role in stabilizing the activated conformation of the receptor motif is present at residues 335 to 339 (NPVLY). At 340–401 (AFLDENFKRC…NLEAETTPLP (62 aa)) the chain is on the cytoplasmic side. Cysteine 354 is lipidated: S-palmitoyl cysteine. The tract at residues 365 to 389 (NSTRIRQNTRDHPSTANTVDRTNHQ) is disordered. Residue serine 366 is modified to Phosphoserine. Threonine 373 is subject to Phosphothreonine. The residue at position 378 (serine 378) is a Phosphoserine. The residue at position 397 (threonine 397) is a Phosphothreonine.

The protein belongs to the G-protein coupled receptor 1 family. As to quaternary structure, forms homooligomers and heterooligomers with other GPCRs, such as OPRD1, OPRK1, OPRL1, NPFFR2, ADRA2A, SSTR2, CNR1 and CCR5 (probably in dimeric forms). Interacts with heterotrimeric G proteins; interaction with a heterotrimeric complex containing GNAI1, GNB1 and GNG2 stabilizes the active conformation of the receptor and increases its affinity for endomorphin-2, the synthetic opioid peptide DAMGO and for morphinan agonists. Interacts with PPL; the interaction disrupts agonist-mediated G-protein activation. Interacts (via C-terminus) with DNAJB4 (via C-terminus). Interacts with calmodulin; the interaction inhibits the constitutive activity of OPRM1; it abolishes basal and attenuates agonist-stimulated G-protein coupling. Interacts with FLNA, PLD2, RANBP9 and WLS and GPM6A. Interacts with RTP4. Interacts with SYP and GNAS. Interacts with RGS9, RGS17, RGS20, RGS4, PPP1R9B and HINT1. Post-translationally, phosphorylated. Differentially phosphorylated in basal and agonist-induced conditions. Agonist-mediated phosphorylation modulates receptor internalization. Phosphorylated by GRK2 in a agonist-dependent manner. Phosphorylation at Tyr-169 requires receptor activation, is dependent on non-receptor protein tyrosine kinase Src and results in a decrease in agonist efficacy by reducing G-protein coupling efficiency. Phosphorylated on tyrosine residues; the phosphorylation is involved in agonist-induced G-protein-independent receptor down-regulation. Phosphorylation at Ser-378 is involved in G-protein-dependent but not beta-arrestin-dependent activation of the ERK pathway. Ubiquitinated. A basal ubiquitination seems not to be related to degradation. Ubiquitination is increased upon formation of OPRM1:OPRD1 oligomers leading to proteasomal degradation; the ubiquitination is diminished by RTP4.

It localises to the cell membrane. The protein resides in the cell projection. Its subcellular location is the axon. It is found in the perikaryon. The protein localises to the dendrite. It localises to the endosome. In terms of biological role, receptor for endogenous opioids such as beta-endorphin and endomorphin. Receptor for natural and synthetic opioids including morphine, heroin, DAMGO, fentanyl, etorphine, buprenorphin and methadone. Also activated by enkephalin peptides, such as Met-enkephalin or Met-enkephalin-Arg-Phe, with higher affinity for Met-enkephalin-Arg-Phe. Agonist binding to the receptor induces coupling to an inactive GDP-bound heterotrimeric G-protein complex and subsequent exchange of GDP for GTP in the G-protein alpha subunit leading to dissociation of the G-protein complex with the free GTP-bound G-protein alpha and the G-protein beta-gamma dimer activating downstream cellular effectors. The agonist- and cell type-specific activity is predominantly coupled to pertussis toxin-sensitive G(i) and G(o) G alpha proteins, GNAI1, GNAI2, GNAI3 and GNAO1, and to a lesser extent to pertussis toxin-insensitive G alpha proteins GNAZ and GNA15. They mediate an array of downstream cellular responses, including inhibition of adenylate cyclase activity and both N-type and L-type calcium channels, activation of inward rectifying potassium channels, mitogen-activated protein kinase (MAPK), phospholipase C (PLC), phosphoinositide/protein kinase (PKC), phosphoinositide 3-kinase (PI3K) and regulation of NF-kappa-B. Also couples to adenylate cyclase stimulatory G alpha proteins. The selective temporal coupling to G-proteins and subsequent signaling can be regulated by RGSZ proteins, such as RGS9, RGS17 and RGS4. Phosphorylation by members of the GPRK subfamily of Ser/Thr protein kinases and association with beta-arrestins is involved in short-term receptor desensitization. Beta-arrestins associate with the GPRK-phosphorylated receptor and uncouple it from the G-protein thus terminating signal transduction. The phosphorylated receptor is internalized through endocytosis via clathrin-coated pits which involves beta-arrestins. The activation of the ERK pathway occurs either in a G-protein-dependent or a beta-arrestin-dependent manner and is regulated by agonist-specific receptor phosphorylation. Acts as a class A G-protein coupled receptor (GPCR) which dissociates from beta-arrestin at or near the plasma membrane and undergoes rapid recycling. Receptor down-regulation pathways are varying with the agonist and occur dependent or independent of G-protein coupling. Endogenous ligands induce rapid desensitization, endocytosis and recycling. Heterooligomerization with other GPCRs can modulate agonist binding, signaling and trafficking properties. Involved in neurogenesis. The polypeptide is Mu-type opioid receptor (OPRM1) (Bos taurus (Bovine)).